A 603-amino-acid polypeptide reads, in one-letter code: Protein Spindly (603 aa).

Met-1 carries the post-translational modification N-acetylmethionine. Residues 1 to 442 (MESDVIADLR…LKLKYEPEEK (442 aa)) adopt a coiled-coil conformation. A phosphoserine mark is found at Ser-513 and Ser-553. The disordered stretch occupies residues 542 to 577 (ALSERSRNTPNSPRLAAESRLQREVKQGKETASKLE). The span at 561–577 (RLQREVKQGKETASKLE) shows a compositional bias: basic and acidic residues.

The protein belongs to the Spindly family. In terms of assembly, interacts with KNTC1 and ZW10. These interactions appear weak and may be transient or indirect. Interacts with dynein intermediate chain and dynactin (DCTN1). Interacts with the catalytically active form of USP45. Post-translationally, monoubiquitinated with'Lys-48' linkage. Deubiquitinated by USP45.

It is found in the cytoplasm. The protein resides in the cytoskeleton. Its subcellular location is the microtubule organizing center. It localises to the centrosome. The protein localises to the chromosome. It is found in the centromere. The protein resides in the kinetochore. Its subcellular location is the nucleus. It localises to the spindle pole. Its function is as follows. Required for the localization of dynein and dynactin to the mitotic kintochore. Dynein is believed to control the initial lateral interaction between the kinetochore and spindle microtubules and to facilitate the subsequent formation of end-on kinetochore-microtubule attachments mediated by the NDC80 complex. Also required for correct spindle orientation. Does not appear to be required for the removal of spindle assembly checkpoint (SAC) proteins from the kinetochore upon bipolar spindle attachment. Acts as an adapter protein linking the dynein motor complex to various cargos and converts dynein from a non-processive to a highly processive motor in the presence of dynactin. Facilitates the interaction between dynein and dynactin and activates dynein processivity (the ability to move along a microtubule for a long distance without falling off the track). Plays a role in cell migration. In Bos taurus (Bovine), this protein is Protein Spindly.